Here is a 277-residue protein sequence, read N- to C-terminus: Digeranylgeranylglyceryl phosphate synthase (277 aa).

The next 7 helical transmembrane spans lie at 16 to 36, 84 to 104, 107 to 127, 146 to 166, 200 to 220, 221 to 241, and 257 to 277; these read ILAGIVGILGALVAYEGIPDI, ALYYALLQYAIGSILAYFLNI, FVFATIAYFLTFLYGWKLKPL, GAIGVGRIGLAGYLAICAFLV, AIIAAIFGFLTVIASFLPVKV, GIGLGYAPIIIVDIIIIKASI, and LKIATFVAVISFLAGALTKGV.

The protein belongs to the UbiA prenyltransferase family. DGGGP synthase subfamily. Mg(2+) is required as a cofactor.

The protein localises to the cell membrane. The catalysed reaction is sn-3-O-(geranylgeranyl)glycerol 1-phosphate + (2E,6E,10E)-geranylgeranyl diphosphate = 2,3-bis-O-(geranylgeranyl)-sn-glycerol 1-phosphate + diphosphate. The protein operates within membrane lipid metabolism; glycerophospholipid metabolism. In terms of biological role, prenyltransferase that catalyzes the transfer of the geranylgeranyl moiety of geranylgeranyl diphosphate (GGPP) to the C2 hydroxyl of (S)-3-O-geranylgeranylglyceryl phosphate (GGGP). This reaction is the second ether-bond-formation step in the biosynthesis of archaeal membrane lipids. The polypeptide is Digeranylgeranylglyceryl phosphate synthase (Pyrococcus furiosus (strain ATCC 43587 / DSM 3638 / JCM 8422 / Vc1)).